The following is a 1405-amino-acid chain: DNA-directed RNA polymerase subunit beta' (1405 aa).

4 residues coordinate Zn(2+): cysteine 70, cysteine 72, cysteine 85, and cysteine 88. 3 residues coordinate Mg(2+): aspartate 460, aspartate 462, and aspartate 464. Positions 814, 888, 895, and 898 each coordinate Zn(2+).

This sequence belongs to the RNA polymerase beta' chain family. As to quaternary structure, the RNAP catalytic core consists of 2 alpha, 1 beta, 1 beta' and 1 omega subunit. When a sigma factor is associated with the core the holoenzyme is formed, which can initiate transcription. It depends on Mg(2+) as a cofactor. The cofactor is Zn(2+).

It catalyses the reaction RNA(n) + a ribonucleoside 5'-triphosphate = RNA(n+1) + diphosphate. Its function is as follows. DNA-dependent RNA polymerase catalyzes the transcription of DNA into RNA using the four ribonucleoside triphosphates as substrates. This chain is DNA-directed RNA polymerase subunit beta', found in Shewanella oneidensis (strain ATCC 700550 / JCM 31522 / CIP 106686 / LMG 19005 / NCIMB 14063 / MR-1).